The primary structure comprises 316 residues: tRNA dimethylallyltransferase (316 aa).

Residue 17 to 24 (GPTASGKT) coordinates ATP. Substrate is bound at residue 19–24 (TASGKT). 4 interaction with substrate tRNA regions span residues 42–45 (DSAL), 166–170 (QRLSR), 247–252 (RCVGYR), and 280–287 (KRQITWLR).

It belongs to the IPP transferase family. In terms of assembly, monomer. The cofactor is Mg(2+).

The enzyme catalyses adenosine(37) in tRNA + dimethylallyl diphosphate = N(6)-dimethylallyladenosine(37) in tRNA + diphosphate. Its function is as follows. Catalyzes the transfer of a dimethylallyl group onto the adenine at position 37 in tRNAs that read codons beginning with uridine, leading to the formation of N6-(dimethylallyl)adenosine (i(6)A). In Shigella flexneri serotype 5b (strain 8401), this protein is tRNA dimethylallyltransferase.